A 723-amino-acid chain; its full sequence is MSSAPNDDCEIDKGTPSTASLFTTLMLSQPSSSTAVLQCTYCGSSCTSSQLQTCLFCGTVAYCSKEHQQLDWLTHKMICKSLQTSGMVPSNLMPQAAPAVMAPIPPTVSFDDPALTTSLLLSLQNNPILNQTISNFPPTFSITSKTEPEPSIPIQIPQRISSTSTVPFSSEGSAFKPYRNTHVFNSISSESMSSMCTSHEASLEHMSSASLAMFPTSSTAQSDISRLAQVLSLAGDSPASLALVTTSVPSTASTATIPPPATTTSSATSSGKSETITVGKEKIIQTDDPDIQIIETEGGSKPTVSRTRKRPTPSNSADPKINYKDHNKNVVYSTTLQEHQKHLQNRGLALSIHQAMVLRLRYIAEHVIRSLNEFGWAVVDNFLGSDHYKFTAKEIERLYERGLFSPGQLMEAKHKDEFHIKDIRSDHIYWYDGYDGRAKDAATVRLLISMIDSVIQHFKKRIDHDIGGRSRAMLAIYPGNGTRYVKHVDNPVKDGRCITTIYYCNENWDMATDGGTLRLYPETSMTPMDIDPRADRLVFFWSDRRNPHEVMPVFRHRFAITIWYMDKSERDKALAKGKESDAACASKKENDPTSSSLNSLIGSLLRPRKNPSTHDLSKLDLRLFPSTSSDPALVSAADEDRVDISADFQSTSSLAHPESTDSGVSLSTFNVAHNHMERTTSLQSISDHFRSERSHERRSSTSSDQDLDEGLPPPPSTNPEYYI.

Zn(2+) contacts are provided by cysteine 39, cysteine 42, cysteine 54, cysteine 57, cysteine 63, histidine 67, histidine 75, and cysteine 79. An MYND-type; atypical zinc finger spans residues 39 to 79 (CTYCGSSCTSSQLQTCLFCGTVAYCSKEHQQLDWLTHKMIC). Residues 249–270 (PSTASTATIPPPATTTSSATSS) are compositionally biased toward low complexity. Disordered stretches follow at residues 249–275 (PSTA…KSET) and 294–323 (IETE…KINY). One can recognise a Fe2OG dioxygenase domain in the interval 468–566 (GRSRAMLAIY…RFAITIWYMD (99 aa)). Fe cation-binding residues include histidine 487, aspartate 489, and histidine 548. Arginine 557 is a binding site for 2-oxoglutarate. The interval 678–723 (RTTSLQSISDHFRSERSHERRSSTSSDQDLDEGLPPPPSTNPEYYI) is disordered. Over residues 687-699 (DHFRSERSHERRS) the composition is skewed to basic and acidic residues.

Interacts (via catalytic domain) with lin-10 (via N-terminus); the interaction regulates lin-10 subcellular localization; the interaction is direct. Interacts (via catalytic domain) with swan-1 (via WD 1-3 repeats); the interaction may regulate vhl-1-independent hif-1 transcriptional activity; the interaction is direct. Interacts (via C-terminus) with cysl-1; the interaction is enhanced by hydrogen disulfide and activates hif-1-mediated transcription; the interaction is direct. It depends on Fe(2+) as a cofactor. The cofactor is L-ascorbate. In terms of tissue distribution, in larvae and adults, expressed in pharyngeal and body wall muscles.

Its subcellular location is the cytoplasm. It localises to the nucleus. It is found in the cell projection. The protein localises to the dendrite. The protein resides in the axon. It catalyses the reaction L-prolyl-[hypoxia-inducible factor alpha subunit] + 2-oxoglutarate + O2 = trans-4-hydroxy-L-prolyl-[hypoxia-inducible factor alpha subunit] + succinate + CO2. With respect to regulation, inhibited by Co(2+) and dimethyloxalylglycine. Inhibited by the iron chelator 2, 2'-dipyridyl. In terms of biological role, cellular oxygen sensor which regulates the stability and the activity of hypoxia-inducible transcription factor, hif-1. In normoxic conditions, hydroxylates hif-1 targeting it for vhl-1-mediated proteasomal degradation. In addition, regulates hif-1 transcriptional activity in a vhl-1-independent manner and independently of its hydroxylase activity. By regulating hif-1 activity, controls several cellular responses. Mediates susceptibility to B.thuringiensis and V.cholerae pore-forming toxins and enteropathogenic E.coli. Mediates susceptibility to P.aeruginosa PAO1-mediated killing by regulating resistance to cyanide produced by P.aeruginosa. Mediates resistance to S.aureus-mediated killing. In addition, plays a role in heat acclimation, neuronal development, behavioral responses to reoxygenation and hydrogen sulfide, iron homeostasis and aging. In neurons, involved in mitochondrion fusion during reoxygenation. Involved in egg laying. Its function is as follows. Regulates the trafficking of the glutamate receptor glr-1, probably independently of hif-1, by regulating lin-10 subcellular localization in response to oxygen levels. May hydroxylate lin-10. The protein is Hypoxia-inducible factor prolyl hydroxylase of Caenorhabditis elegans.